The sequence spans 126 residues: Holo-[acyl-carrier-protein] synthase (126 aa).

Mg(2+)-binding residues include aspartate 9 and glutamate 58.

It belongs to the P-Pant transferase superfamily. AcpS family. Requires Mg(2+) as cofactor.

It localises to the cytoplasm. The enzyme catalyses apo-[ACP] + CoA = holo-[ACP] + adenosine 3',5'-bisphosphate + H(+). Transfers the 4'-phosphopantetheine moiety from coenzyme A to a Ser of acyl-carrier-protein. This is Holo-[acyl-carrier-protein] synthase from Aliivibrio fischeri (strain MJ11) (Vibrio fischeri).